The sequence spans 330 residues: Autoinducer 2 import system permease protein LsrD (330 aa).

The Cytoplasmic portion of the chain corresponds to 1–4 (MRIR). Residues 5–25 (YGWELALAALLVIEIVSFGAI) traverse the membrane as a helical segment. The Periplasmic portion of the chain corresponds to 26 to 42 (NPRMLDLNMLLFSTSDF). Residues 43 to 63 (ICIGIVALPLTMVIVSGGIDI) form a helical membrane-spanning segment. Topologically, residues 64–67 (SFGS) are cytoplasmic. A run of 2 helical transmembrane segments spans residues 68–88 (TIGL…PMPL) and 89–109 (AILL…GLII). The Cytoplasmic portion of the chain corresponds to 110 to 115 (YTKVNP). The helical transmembrane segment at 116–136 (LVITLGTLYLFAGSALLLSGM) threads the bilayer. Topologically, residues 137-159 (AGATGYEGIGGFPMAFTDFANLD) are periplasmic. The helical transmembrane segment at 160 to 180 (VLGLPVPLIIFLICLLVFWLW) threads the bilayer. The Cytoplasmic segment spans residues 181-209 (LHKTHAGRNVFLIGQSPRVALYSAIPVNR). The helical transmembrane segment at 210 to 230 (TLCALYAMTGLASAVAAVLLV) threads the bilayer. Over 231-237 (SYFGSAR) the chain is Periplasmic. Helical transmembrane passes span 238–258 (SDLG…GGAN) and 259–279 (IYGG…VGYL). Residues 280–285 (QQGLQM) are Periplasmic-facing. Residues 286–306 (AGVPNQVSSALSGALLIVVVV) form a helical membrane-spanning segment. Residues 307–330 (GRSVSLHRQQIKEWLARRANNPLP) are Cytoplasmic-facing.

It belongs to the binding-protein-dependent transport system permease family. AraH/RbsC subfamily. In terms of assembly, the complex is composed of two ATP-binding proteins (LsrA), two transmembrane proteins (LsrC and LsrD) and a solute-binding protein (LsrB).

It is found in the cell inner membrane. Part of the ABC transporter complex LsrABCD involved in autoinducer 2 (AI-2) import. Probably responsible for the translocation of the substrate across the membrane. The polypeptide is Autoinducer 2 import system permease protein LsrD (lsrD) (Escherichia coli O157:H7).